We begin with the raw amino-acid sequence, 737 residues long: Elongation factor 2 (737 aa).

A tr-type G domain is found at 18-262 (TRVRNIGIIA…AVIKFVPNPR (245 aa)). Residues 27–34 (AHVDHGKT), 93–97 (DTPGH), and 147–150 (NKVD) each bind GTP. Diphthamide is present on His604.

It belongs to the TRAFAC class translation factor GTPase superfamily. Classic translation factor GTPase family. EF-G/EF-2 subfamily.

The protein resides in the cytoplasm. Catalyzes the GTP-dependent ribosomal translocation step during translation elongation. During this step, the ribosome changes from the pre-translocational (PRE) to the post-translocational (POST) state as the newly formed A-site-bound peptidyl-tRNA and P-site-bound deacylated tRNA move to the P and E sites, respectively. Catalyzes the coordinated movement of the two tRNA molecules, the mRNA and conformational changes in the ribosome. The protein is Elongation factor 2 (fusA) of Sulfolobus acidocaldarius (strain ATCC 33909 / DSM 639 / JCM 8929 / NBRC 15157 / NCIMB 11770).